Here is a 669-residue protein sequence, read N- to C-terminus: Threonine--tRNA ligase (669 aa).

A TGS domain is found at 3–60 (DAQQITLIVDGEETKVTEGTTGAELFFERRDVVVARVNGVLKDLDQVLTEGADVEGVT). Positions 260–566 (DHRKLGVELD…LTEHYAGAFP (307 aa)) are catalytic. Residues C365, H416, and H543 each contribute to the Zn(2+) site.

The protein belongs to the class-II aminoacyl-tRNA synthetase family. In terms of assembly, homodimer. It depends on Zn(2+) as a cofactor.

It is found in the cytoplasm. It carries out the reaction tRNA(Thr) + L-threonine + ATP = L-threonyl-tRNA(Thr) + AMP + diphosphate + H(+). Catalyzes the attachment of threonine to tRNA(Thr) in a two-step reaction: L-threonine is first activated by ATP to form Thr-AMP and then transferred to the acceptor end of tRNA(Thr). Also edits incorrectly charged L-seryl-tRNA(Thr). The chain is Threonine--tRNA ligase from Paenarthrobacter aurescens (strain TC1).